The primary structure comprises 645 residues: Fructose-1,6-bisphosphatase class 3 (645 aa).

Belongs to the FBPase class 3 family. It depends on Mn(2+) as a cofactor.

It catalyses the reaction beta-D-fructose 1,6-bisphosphate + H2O = beta-D-fructose 6-phosphate + phosphate. Its pathway is carbohydrate biosynthesis; gluconeogenesis. This chain is Fructose-1,6-bisphosphatase class 3, found in Fusobacterium nucleatum subsp. nucleatum (strain ATCC 25586 / DSM 15643 / BCRC 10681 / CIP 101130 / JCM 8532 / KCTC 2640 / LMG 13131 / VPI 4355).